The sequence spans 3567 residues: Zinc finger homeobox protein 4 (3567 aa).

Residue methionine 1 is modified to N-acetylmethionine. Disordered stretches follow at residues 1–54 (METC…LKTD), 425–480 (LSHS…AYSN), 522–545 (TSSS…VRAS), and 565–611 (SKDS…SPGS). The segment covering 9–28 (ISRQENGQSTSKLCGTTQLD) has biased composition (polar residues). 2 stretches are compositionally biased toward basic and acidic residues: residues 39 to 54 (EPDR…LKTD) and 434 to 452 (KMSE…KESN). Residues 468-480 (EPGDEDEEDAYSN) show a composition bias toward acidic residues. C2H2-type zinc fingers lie at residues 613–636 (IECP…TMMH), 644–667 (LKCP…KEKH), and 699–723 (FRCE…SDKH). The C2H2-type 4; degenerate zinc finger occupies 767–789 (WRCEVCDYETNVARNLRIHMTSE). 3 C2H2-type zinc fingers span residues 917-941 (YQCK…TDKH), 973-995 (LKCN…TTNH), and 1021-1045 (YYCA…SVKH). Positions 1098-1160 (EQHEEAEGAI…EDVATKRSKP (63 aa)) are disordered. 2 stretches are compositionally biased toward basic and acidic residues: residues 1120–1132 (TSER…KNSN) and 1148–1160 (AKEE…RSKP). Lysine 1149 participates in a covalent cross-link: Glycyl lysine isopeptide (Lys-Gly) (interchain with G-Cter in SUMO2). 2 C2H2-type zinc fingers span residues 1172–1195 (YQCP…LSQH) and 1201–1224 (ICCP…THLH). The disordered stretch occupies residues 1254–1324 (AASEKSERDT…WNKNSSKDVK (71 aa)). Over residues 1281–1310 (MDDKSMAGLEDSKANVEVKNEEQKPTKEPL) the composition is skewed to basic and acidic residues. Glycyl lysine isopeptide (Lys-Gly) (interchain with G-Cter in SUMO2) cross-links involve residues lysine 1299 and lysine 1324. 2 C2H2-type zinc fingers span residues 1352–1374 (YRCN…SQYH) and 1380–1403 (TMCN…EAGH). A disordered region spans residues 1429 to 1480 (ETMSQDDHGLEQEMEREYEVDHEGKASPVGSDSSSIPDDMGSEPKRTLPFRK). Over residues 1433–1453 (QDDHGLEQEMEREYEVDHEGK) the composition is skewed to basic and acidic residues. The C2H2-type 12 zinc finger occupies 1496–1522 (YKCTVCKESFTQKNILLVHYNSVSHLH). Residue lysine 1546 forms a Glycyl lysine isopeptide (Lys-Gly) (interchain with G-Cter in SUMO2) linkage. A C2H2-type 13 zinc finger spans residues 1548–1572 (YKCSICNVAYSQSSTLEIHMRSVLH). Composition is skewed to low complexity over residues 1761–1772 (TQPQLQPQKQQQ) and 1779–1791 (QQQQ…LLKQ). Disordered stretches follow at residues 1761-1791 (TQPQ…LLKQ) and 1809-1858 (SYKE…IASG). Residue lysine 1790 forms a Glycyl lysine isopeptide (Lys-Gly) (interchain with G-Cter in SUMO2) linkage. Basic and acidic residues predominate over residues 1809–1845 (SYKEAEDISEKPEKPKQEFISEGEGLKEGKDTKKQKS). The C2H2-type 14 zinc finger occupies 1901-1924 (LECGTCGKLFSNVLILKSHQEHVH). A disordered region spans residues 1948–2024 (YPISPSSPET…PPSAPPQVQL (77 aa)). Pro residues-rich tracts occupy residues 1955-1974 (PETP…PPQP) and 1991-2019 (QAPP…PSAP). 2 consecutive DNA-binding regions (homeobox) follow at residues 2084–2143 (FKRP…RQRN) and 2181–2240 (KRSS…RKSY). The segment at 2267–2291 (YQCKKCNVVFPRIFDLITHQKKQCY) adopts a C2H2-type 15; degenerate zinc-finger fold. Disordered regions lie at residues 2289-2311 (QCYK…MDAT) and 2328-2431 (AKNA…SPLQ). Residues 2293 to 2309 (DEDDDAQDESQTEDSMD) are compositionally biased toward acidic residues. Low complexity predominate over residues 2331–2345 (AAAPAASSGSGTSTP). A compositionally biased stretch (basic and acidic residues) spans 2352 to 2370 (PEPEKTSPKPEYPAEKPKQ). The segment covering 2419 to 2431 (SASQTPVPSSPLQ) has biased composition (polar residues). The C2H2-type 16 zinc finger occupies 2448–2470 (YQCDQCTVAFPTLELWQEHQHMH). The span at 2507 to 2530 (LGSSLTQMPPQASSSHTTAPTTVA) shows a compositional bias: polar residues. Residues 2507–2564 (LGSSLTQMPPQASSSHTTAPTTVAASLKRKLDDKEDNNCSEKEGGNSGEDQHRDKRLR) form a disordered region. The span at 2535–2559 (RKLDDKEDNNCSEKEGGNSGEDQHR) shows a compositional bias: basic and acidic residues. Positions 2560–2619 (DKRLRTTITPEQLEILYEKYLLDSNPTRKMLDHIAREVGLKKRVVQVWFQNTRARERKGQ) form a DNA-binding region, homeobox 3. The C2H2-type 17 zinc-finger motif lies at 2630–2653 (KRCPFCRALFKAKSALESHIRSRH). Position 2663 is a phosphoserine (serine 2663). Over residues 2764–2785 (AISDATTGDEGNTEMESTTGSS) the composition is skewed to polar residues. 2 disordered regions span residues 2764–2811 (AISD…TTPT) and 2829–2885 (HFND…PGHK). Residues 2830–2839 (FNDKDGDHDQ) are compositionally biased toward basic and acidic residues. Over residues 2862–2874 (PSSPNPFGSSNPF) the composition is skewed to low complexity. The segment at residues 2884–2943 (HKRFRTQMSNLQLKVLKACFSDYRTPTMQECEMLGNEIGLPKRVVQVWFQNARAKEKKFK) is a DNA-binding region (homeobox 4). The segment at 2962-2986 (PECTLCGVKYSARLSIRDHIFSKQH) adopts a C2H2-type 18 zinc-finger fold. Positions 3092-3110 (SATSSPALSLSSAPTKPLL) are enriched in low complexity. 2 disordered regions span residues 3092-3172 (SATS…KEEK) and 3281-3337 (LQKQ…LESK). Residues 3111–3125 (QTPPPPPPPPPPPPS) are compositionally biased toward pro residues. Positions 3126–3135 (SSLSGQQTEQ) are enriched in polar residues. Residues 3153 to 3172 (IKEEELEATKPEKHPKKEEK) are compositionally biased toward basic and acidic residues. Lysine 3154 participates in a covalent cross-link: Glycyl lysine isopeptide (Lys-Gly) (interchain with G-Cter in SUMO2). The stretch at 3265-3294 (ALLQQYQQYQQNLQESLQKQQKQQQEQQQK) forms a coiled coil. Residues 3281-3293 (LQKQQKQQQEQQQ) are compositionally biased toward low complexity. The segment covering 3294–3314 (KPVQAKTSKVESDQPQNSNDA) has biased composition (polar residues). The segment covering 3315 to 3337 (SETKEDKSTATESTKEEPQLESK) has biased composition (basic and acidic residues). The C2H2-type 19; degenerate zinc finger occupies 3354-3378 (FICRKCQMMFTDEDAAVNHQKSFCY). Residues 3398 to 3422 (YQCLACDVAISGNEALSQHLQSSLH) form a C2H2-type 20 zinc finger. 2 disordered regions span residues 3443-3462 (HSVC…AASS) and 3511-3534 (STSG…ELSQ). Low complexity predominate over residues 3447–3462 (SPNPNTTSTSQSAASS).

This sequence belongs to the krueppel C2H2-type zinc-finger protein family. As to expression, expressed in brain, skeletal muscle and liver. Very low expression in stomach.

It is found in the nucleus. Functionally, may play a role in neural and muscle differentiation. May be involved in transcriptional regulation. The polypeptide is Zinc finger homeobox protein 4 (ZFHX4) (Homo sapiens (Human)).